Reading from the N-terminus, the 400-residue chain is Tryptophan synthase beta chain (400 aa).

Lys92 is modified (N6-(pyridoxal phosphate)lysine).

It belongs to the TrpB family. As to quaternary structure, tetramer of two alpha and two beta chains. It depends on pyridoxal 5'-phosphate as a cofactor.

It carries out the reaction (1S,2R)-1-C-(indol-3-yl)glycerol 3-phosphate + L-serine = D-glyceraldehyde 3-phosphate + L-tryptophan + H2O. Its pathway is amino-acid biosynthesis; L-tryptophan biosynthesis; L-tryptophan from chorismate: step 5/5. The beta subunit is responsible for the synthesis of L-tryptophan from indole and L-serine. The sequence is that of Tryptophan synthase beta chain from Neisseria gonorrhoeae.